The sequence spans 410 residues: Chloroacetanilide N-alkylformylase, ferredoxin reductase component (410 aa).

Residues Gly-14, Asp-36, Lys-49, Val-82, Arg-130, Asp-279, and Val-298 each contribute to the FAD site.

It belongs to the FAD-dependent oxidoreductase family. The chloroacetanilide N-alkylformylase multicomponent enzyme system is composed of an oxygenase component (CndA) and an electron transfer component formed by a ferredoxin reductase (CndC1) and a ferredoxin (CndB1). In vitro, chloroacetanilide N-alkylformylase assays in which CndB1 is substituted for CndB2 demonstrate that the two enzymes possess nearly identical activities. FAD serves as cofactor.

It catalyses the reaction 2 reduced [2Fe-2S]-[ferredoxin] + NAD(+) + H(+) = 2 oxidized [2Fe-2S]-[ferredoxin] + NADH. In terms of biological role, component of the chloroacetanilide N-alkylformylase multicomponent enzyme system involved in the degradation of chloroacetanilide herbicides (N-alkoxyalkyl-N-chloroacetyl-substituted aniline derivatives). In vitro, catalyzes the transfers of electrons from ferredoxin (CndB1) to NADH. N-dealkylase utilizes NADH, but not NADPH, as the electron donor. The sequence is that of Chloroacetanilide N-alkylformylase, ferredoxin reductase component from Rhizorhabdus wittichii (strain DC-6 / KACC 16600) (Sphingomonas wittichii).